The following is a 158-amino-acid chain: Ribosome maturation factor RimP (158 aa).

The protein belongs to the RimP family.

Its subcellular location is the cytoplasm. In terms of biological role, required for maturation of 30S ribosomal subunits. The polypeptide is Ribosome maturation factor RimP (Streptococcus suis (strain 05ZYH33)).